We begin with the raw amino-acid sequence, 330 residues long: MKVFYDSDFKLDALKEKTIAVIGYGSQGRAQSLNMKDSGLNVVVGLRKNGASWENAKADGHNVMTIEEAAEKADIIHILIPDELQAEVYDAQIKPCLKEGKTLSFSHGFNIHYGFIVPPKGVNVVLVAPKSPGKMVRRTYEEGFGVPGLICIEIDATNNAFDIVSAMAKGIGLSRAGVIQTTFKEETETDLFGEQAVLCGGVTELIKAGFETLVEAGYAPEMAYFETCHELKLIVDLIYQKGFKNMWNDVSNTAEYGGLTRRSRIVTADSKAAMKEILKEIQDGRFTKEFVLEKQVNHAHLKAMRRIEGELQIEEVGAKLRKMCGLEKEE.

Positions 1–181 (MKVFYDSDFK…GLSRAGVIQT (181 aa)) constitute a KARI N-terminal Rossmann domain. NADP(+) contacts are provided by residues 24-27 (YGSQ), arginine 47, serine 52, and 82-85 (DELQ). Residue histidine 107 is part of the active site. Glycine 133 is a binding site for NADP(+). Positions 182–327 (TFKEETETDL…AKLRKMCGLE (146 aa)) constitute a KARI C-terminal knotted domain. Residues aspartate 190, glutamate 194, glutamate 226, and glutamate 230 each contribute to the Mg(2+) site. Residue serine 251 coordinates substrate.

It belongs to the ketol-acid reductoisomerase family. Mg(2+) is required as a cofactor.

The enzyme catalyses (2R)-2,3-dihydroxy-3-methylbutanoate + NADP(+) = (2S)-2-acetolactate + NADPH + H(+). It catalyses the reaction (2R,3R)-2,3-dihydroxy-3-methylpentanoate + NADP(+) = (S)-2-ethyl-2-hydroxy-3-oxobutanoate + NADPH + H(+). The protein operates within amino-acid biosynthesis; L-isoleucine biosynthesis; L-isoleucine from 2-oxobutanoate: step 2/4. It functions in the pathway amino-acid biosynthesis; L-valine biosynthesis; L-valine from pyruvate: step 2/4. Functionally, involved in the biosynthesis of branched-chain amino acids (BCAA). Catalyzes an alkyl-migration followed by a ketol-acid reduction of (S)-2-acetolactate (S2AL) to yield (R)-2,3-dihydroxy-isovalerate. In the isomerase reaction, S2AL is rearranged via a Mg-dependent methyl migration to produce 3-hydroxy-3-methyl-2-ketobutyrate (HMKB). In the reductase reaction, this 2-ketoacid undergoes a metal-dependent reduction by NADPH to yield (R)-2,3-dihydroxy-isovalerate. The polypeptide is Ketol-acid reductoisomerase (NADP(+)) (Methanococcus maripaludis (strain C6 / ATCC BAA-1332)).